Here is a 168-residue protein sequence, read N- to C-terminus: Ribosome rescue factor SmrB (168 aa).

The 76-residue stretch at 92–167 (LDLHGLTKEQ…GDAAILILFE (76 aa)) folds into the Smr domain.

This sequence belongs to the SmrB family. In terms of assembly, associates with collided ribosomes, but not with correctly translating polysomes.

Its function is as follows. Acts as a ribosome collision sensor. Detects stalled/collided disomes (pairs of ribosomes where the leading ribosome is stalled and a second ribosome has collided with it) and endonucleolytically cleaves mRNA at the 5' boundary of the stalled ribosome. Stalled/collided disomes form a new interface (primarily via the 30S subunits) that binds SmrB. Cleaved mRNA becomes available for tmRNA ligation, leading to ribosomal subunit dissociation and rescue of stalled ribosomes. The chain is Ribosome rescue factor SmrB from Pasteurella multocida (strain Pm70).